The sequence spans 331 residues: Flagellar P-ring protein (331 aa).

An N-terminal signal peptide occupies residues 1 to 22 (MRKVTIFIIIIVALTGFGSVRI).

It belongs to the FlgI family. In terms of assembly, the basal body constitutes a major portion of the flagellar organelle and consists of four rings (L,P,S, and M) mounted on a central rod.

It localises to the periplasm. The protein localises to the bacterial flagellum basal body. In terms of biological role, assembles around the rod to form the L-ring and probably protects the motor/basal body from shearing forces during rotation. In Pseudothermotoga lettingae (strain ATCC BAA-301 / DSM 14385 / NBRC 107922 / TMO) (Thermotoga lettingae), this protein is Flagellar P-ring protein.